The primary structure comprises 447 residues: Growth/differentiation factor 7 (447 aa).

An N-terminal signal peptide occupies residues 1 to 19 (MDLSAAAALCLWLLSACRP). The propeptide occupies 20-318 (RDGLEAAAVL…AVTAGRRRRR (299 aa)). Residue Asn80 is glycosylated (N-linked (GlcNAc...) asparagine). The tract at residues 292–346 (LAAQPPPDPGTGTGSPRAVTAGRRRRRTALAGTRTAQGSGGGAGRGHGRRGRSRC) is disordered. The span at 337–346 (GHGRRGRSRC) shows a compositional bias: basic residues. Intrachain disulfides connect Cys346–Cys412, Cys375–Cys444, and Cys379–Cys446.

It belongs to the TGF-beta family. As to quaternary structure, homodimer; disulfide-linked. In terms of tissue distribution, highly expressed in the primary aera of brain neocortex.

The protein resides in the secreted. May play an active role in the motor area of the primate neocortex. The sequence is that of Growth/differentiation factor 7 (GDF7) from Chlorocebus aethiops (Green monkey).